The primary structure comprises 261 residues: ATP synthase subunit a (261 aa).

7 helical membrane passes run 31–51 (IAFT…LIFM), 64–84 (WQAA…TNIG), 97–117 (LFMF…VVGV), 126–146 (LTVT…VGFW), 166–188 (IPMI…GLRL), 201–223 (VLAG…VSIP), and 235–255 (ELLV…LYLN).

Belongs to the ATPase A chain family. As to quaternary structure, F-type ATPases have 2 components, CF(1) - the catalytic core - and CF(0) - the membrane proton channel. CF(1) has five subunits: alpha(3), beta(3), gamma(1), delta(1), epsilon(1). CF(0) has three main subunits: a(1), b(2) and c(9-12). The alpha and beta chains form an alternating ring which encloses part of the gamma chain. CF(1) is attached to CF(0) by a central stalk formed by the gamma and epsilon chains, while a peripheral stalk is formed by the delta and b chains.

Its subcellular location is the cell inner membrane. Functionally, key component of the proton channel; it plays a direct role in the translocation of protons across the membrane. The polypeptide is ATP synthase subunit a (Rhizorhabdus wittichii (strain DSM 6014 / CCUG 31198 / JCM 15750 / NBRC 105917 / EY 4224 / RW1) (Sphingomonas wittichii)).